The sequence spans 394 residues: Mitogen-activated protein kinase 2 (394 aa).

A compositionally biased stretch (gly residues) spans 1–31 (MRMEGGGGGGHGHHGGGGGGHGHHGGIGGGE). The segment at 1–33 (MRMEGGGGGGHGHHGGGGGGHGHHGGIGGGEAQ) is disordered. The Protein kinase domain occupies 61-347 (VPPIRPVGRG…VDEALCHPYL (287 aa)). ATP is bound by residues 67–75 (VGRGACGII) and lysine 90. The Proton acceptor role is filled by aspartate 187. Tyrosine 221 carries the post-translational modification Phosphotyrosine.

It belongs to the protein kinase superfamily. CMGC Ser/Thr protein kinase family. MAP kinase subfamily. Post-translationally, the phosphorylation on Tyr-221 activates the enzyme. A conserved Thr, which must also be phosphorylated to activate the enzyme in closely related sequences, is replaced by Met-219 in this sequence.

It carries out the reaction L-seryl-[protein] + ATP = O-phospho-L-seryl-[protein] + ADP + H(+). The enzyme catalyses L-threonyl-[protein] + ATP = O-phospho-L-threonyl-[protein] + ADP + H(+). In Oryza sativa subsp. japonica (Rice), this protein is Mitogen-activated protein kinase 2 (MPK2).